Reading from the N-terminus, the 536-residue chain is MSKFVFVTGGVVSSIGKGIVAASLGRLLKSRGYSVSILKLDPYLNVDPGTMSPFQHGEVFVTEDGAETDLDLGHYERFTDTAMTRLNSVTTGSIYQAVINKERRGSYNGGTVQVIPHITREIRERIHRVAANSNADIVITEIGGTVGDIESLPFLEAIREFKNDVNKNDVAYIHVTLLPYIKTSGEIKTKPTQHSVKELRSIGIQPDLLVCRSDKEINEGLKRKLSGFCGVNLNCVIEALDADSIYSVPLSLKNEGLCKQTLNCLELEDKECDLENWEKIIHNLRNPGNPIKVALVGKYIELGDAYLSVVEALRHACIEQKALLDLYWISAEMIEEKSAEEYLNDVDAIVVPGGFGNRGVNGKIEAIKFAREKNIPFLGLCLGMQCAVIEWARNIAQLPDASSSELNPDSENPVIHLLPEQEDIVDLGGTMRLGVYPCRLQKNTTGKELYNEDVIYERHRHRYEFNNYYKQSFLDSGYKISGTSPDGRLVELIELVDHPYFLACQYHPEFLSRPGKPHPLFKGLIKASQEKLEQSN.

The amidoligase domain stretch occupies residues 1-267; sequence MSKFVFVTGG…CKQTLNCLEL (267 aa). Ser13 lines the CTP pocket. Ser13 contributes to the UTP binding site. ATP-binding positions include 14 to 19 and Asp71; that span reads SIGKGI. Asp71 and Glu141 together coordinate Mg(2+). Residues 148–150, 188–193, and Lys224 each bind CTP; these read DIE and KTKPTQ. UTP-binding positions include 188 to 193 and Lys224; that span reads KTKPTQ. In terms of domain architecture, Glutamine amidotransferase type-1 spans 292-534; that stretch reads KVALVGKYIE…IKASQEKLEQ (243 aa). Residue Gly354 coordinates L-glutamine. The Nucleophile; for glutamine hydrolysis role is filled by Cys381. L-glutamine-binding positions include 382–385, Glu405, and Arg462; that span reads LGMQ. Residues His507 and Glu509 contribute to the active site.

It belongs to the CTP synthase family. As to quaternary structure, homotetramer.

It carries out the reaction UTP + L-glutamine + ATP + H2O = CTP + L-glutamate + ADP + phosphate + 2 H(+). The enzyme catalyses L-glutamine + H2O = L-glutamate + NH4(+). The catalysed reaction is UTP + NH4(+) + ATP = CTP + ADP + phosphate + 2 H(+). Its pathway is pyrimidine metabolism; CTP biosynthesis via de novo pathway; CTP from UDP: step 2/2. Allosterically activated by GTP, when glutamine is the substrate; GTP has no effect on the reaction when ammonia is the substrate. The allosteric effector GTP functions by stabilizing the protein conformation that binds the tetrahedral intermediate(s) formed during glutamine hydrolysis. Inhibited by the product CTP, via allosteric rather than competitive inhibition. In terms of biological role, catalyzes the ATP-dependent amination of UTP to CTP with either L-glutamine or ammonia as the source of nitrogen. Regulates intracellular CTP levels through interactions with the four ribonucleotide triphosphates. The chain is CTP synthase from Prochlorococcus marinus subsp. pastoris (strain CCMP1986 / NIES-2087 / MED4).